Consider the following 383-residue polypeptide: Lipid-A-disaccharide synthase (383 aa).

This sequence belongs to the LpxB family.

The catalysed reaction is a lipid X + a UDP-2-N,3-O-bis[(3R)-3-hydroxyacyl]-alpha-D-glucosamine = a lipid A disaccharide + UDP + H(+). The protein operates within bacterial outer membrane biogenesis; LPS lipid A biosynthesis. In terms of biological role, condensation of UDP-2,3-diacylglucosamine and 2,3-diacylglucosamine-1-phosphate to form lipid A disaccharide, a precursor of lipid A, a phosphorylated glycolipid that anchors the lipopolysaccharide to the outer membrane of the cell. The sequence is that of Lipid-A-disaccharide synthase from Aliivibrio fischeri (strain MJ11) (Vibrio fischeri).